The primary structure comprises 676 residues: Pescadillo homolog (676 aa).

The stretch at 298–327 forms a coiled coil; that stretch reads IAAMADDEDEQEVEMAEADAEDDDEEENTE. Disordered regions lie at residues 298 to 338, 413 to 439, 478 to 502, and 515 to 676; these read IAAM…TAPD, PLAN…STKP, VKPK…EAEA, and EVDD…AERA. Acidic residues predominate over residues 302–327; it reads ADDEDEQEVEMAEADAEDDDEEENTE. Residues 351-466 form the BRCT domain; that stretch reads EIASLFAPFT…KLLRPDLYAP (116 aa). Residues 415–427 show a composition bias toward low complexity; it reads ANGASAAGAEDAA. Acidic residues-rich tracts occupy residues 515-524, 539-557, and 565-577; these read EVDDDEDMDA, DVAD…DAEG, and FDDE…DISE. Residues 568-676 adopt a coiled-coil conformation; it reads ESEAESDISE…EKAKAAAERA (109 aa). Basic and acidic residues-rich tracts occupy residues 579–608, 620–631, 643–659, and 666–676; these read EAAR…KKEQ, KRAEEEERDRQK, KRIE…SENL, and LEKAKAAAERA.

Belongs to the pescadillo family. As to quaternary structure, component of the NOP7 complex, composed of ERB1, NOP7 and YTM1. The complex is held together by ERB1, which interacts with NOP7 via its N-terminal domain and with YTM1 via a high-affinity interaction between the seven-bladed beta-propeller domains of the 2 proteins. The NOP7 complex associates with the 66S pre-ribosome.

The protein resides in the nucleus. The protein localises to the nucleolus. It localises to the nucleoplasm. Component of the NOP7 complex, which is required for maturation of the 25S and 5.8S ribosomal RNAs and formation of the 60S ribosome. This chain is Pescadillo homolog, found in Phaeosphaeria nodorum (strain SN15 / ATCC MYA-4574 / FGSC 10173) (Glume blotch fungus).